A 165-amino-acid polypeptide reads, in one-letter code: Phosphopantetheine adenylyltransferase (165 aa).

T9 contacts substrate. Residues 9-10 (TF) and H17 contribute to the ATP site. Substrate is bound by residues K41, L73, and R87. ATP contacts are provided by residues 88–90 (GLR), E98, and 123–129 (LQPIASR).

It belongs to the bacterial CoaD family. In terms of assembly, homohexamer. Requires Mg(2+) as cofactor.

The protein resides in the cytoplasm. The enzyme catalyses (R)-4'-phosphopantetheine + ATP + H(+) = 3'-dephospho-CoA + diphosphate. The protein operates within cofactor biosynthesis; coenzyme A biosynthesis; CoA from (R)-pantothenate: step 4/5. Reversibly transfers an adenylyl group from ATP to 4'-phosphopantetheine, yielding dephospho-CoA (dPCoA) and pyrophosphate. This chain is Phosphopantetheine adenylyltransferase, found in Rhizorhabdus wittichii (strain DSM 6014 / CCUG 31198 / JCM 15750 / NBRC 105917 / EY 4224 / RW1) (Sphingomonas wittichii).